The following is a 775-amino-acid chain: Mitochondrial intermediate peptidase (775 aa).

The N-terminal 28 residues, 1–28 (MIARPARDVLSSATKKQFRFRGCLAARH), are a transit peptide targeting the mitochondrion. A Zn(2+)-binding site is contributed by H558. E559 is a catalytic residue. The Zn(2+) site is built by H562 and H565.

The protein belongs to the peptidase M3 family. It depends on Zn(2+) as a cofactor.

Its subcellular location is the mitochondrion matrix. The enzyme catalyses Release of an N-terminal octapeptide as second stage of processing of some proteins imported into the mitochondrion.. Cleaves proteins, imported into the mitochondrion, to their mature size. While most mitochondrial precursor proteins are processed to the mature form in one step by mitochondrial processing peptidase (MPP), the sequential cleavage by MIP of an octapeptide after initial processing by MPP is a required step for a subgroup of nuclear-encoded precursor proteins destined for the matrix or the inner membrane. The protein is Mitochondrial intermediate peptidase (OCT1) of Schizophyllum commune (Split gill fungus).